The sequence spans 749 residues: Chaperone protein dnaK3 (749 aa).

Phosphothreonine; by autocatalysis is present on threonine 198. Basic and acidic residues-rich tracts occupy residues 643 to 653 (RWDADPWDRSR), 661 to 694 (YDDR…RDRN), and 711 to 724 (PTWE…RDRS). Residues 643-749 (RWDADPWDRS…GWDDDDDEWF (107 aa)) form a disordered region. Residues 740-749 (GWDDDDDEWF) show a composition bias toward acidic residues.

Belongs to the heat shock protein 70 family.

Acts as a chaperone. This is Chaperone protein dnaK3 (dnaK3) from Synechococcus elongatus (strain ATCC 33912 / PCC 7942 / FACHB-805) (Anacystis nidulans R2).